The chain runs to 158 residues: NAD(P)H-quinone oxidoreductase subunit J, chloroplastic (158 aa).

The protein belongs to the complex I 30 kDa subunit family. NDH is composed of at least 16 different subunits, 5 of which are encoded in the nucleus.

It localises to the plastid. Its subcellular location is the chloroplast thylakoid membrane. The catalysed reaction is a plastoquinone + NADH + (n+1) H(+)(in) = a plastoquinol + NAD(+) + n H(+)(out). It catalyses the reaction a plastoquinone + NADPH + (n+1) H(+)(in) = a plastoquinol + NADP(+) + n H(+)(out). Its function is as follows. NDH shuttles electrons from NAD(P)H:plastoquinone, via FMN and iron-sulfur (Fe-S) centers, to quinones in the photosynthetic chain and possibly in a chloroplast respiratory chain. The immediate electron acceptor for the enzyme in this species is believed to be plastoquinone. Couples the redox reaction to proton translocation, and thus conserves the redox energy in a proton gradient. This is NAD(P)H-quinone oxidoreductase subunit J, chloroplastic from Nandina domestica (Heavenly bamboo).